Consider the following 331-residue polypeptide: Biotin synthase (331 aa).

The region spanning 48 to 278 is the Radical SAM core domain; the sequence is FDSQKFEFCS…SAELRLCGGR (231 aa). [4Fe-4S] cluster contacts are provided by Cys66, Cys70, and Cys73. The [2Fe-2S] cluster site is built by Cys110, Cys143, Cys203, and Arg273.

Belongs to the radical SAM superfamily. Biotin synthase family. Homodimer. [4Fe-4S] cluster serves as cofactor. Requires [2Fe-2S] cluster as cofactor.

It catalyses the reaction (4R,5S)-dethiobiotin + (sulfur carrier)-SH + 2 reduced [2Fe-2S]-[ferredoxin] + 2 S-adenosyl-L-methionine = (sulfur carrier)-H + biotin + 2 5'-deoxyadenosine + 2 L-methionine + 2 oxidized [2Fe-2S]-[ferredoxin]. Its pathway is cofactor biosynthesis; biotin biosynthesis; biotin from 7,8-diaminononanoate: step 2/2. Its function is as follows. Catalyzes the conversion of dethiobiotin (DTB) to biotin by the insertion of a sulfur atom into dethiobiotin via a radical-based mechanism. In Hydrogenobaculum sp. (strain Y04AAS1), this protein is Biotin synthase.